A 132-amino-acid polypeptide reads, in one-letter code: Small ribosomal subunit protein uS8 (132 aa).

It belongs to the universal ribosomal protein uS8 family. Part of the 30S ribosomal subunit. Contacts proteins S5 and S12.

Its function is as follows. One of the primary rRNA binding proteins, it binds directly to 16S rRNA central domain where it helps coordinate assembly of the platform of the 30S subunit. This Mycobacterium avium (strain 104) protein is Small ribosomal subunit protein uS8.